Reading from the N-terminus, the 148-residue chain is Deoxyuridine 5'-triphosphate nucleotidohydrolase (148 aa).

Substrate-binding positions include 68–70 (RSG), asparagine 81, 85–87 (TID), and lysine 95.

Belongs to the dUTPase family. The cofactor is Mg(2+).

The catalysed reaction is dUTP + H2O = dUMP + diphosphate + H(+). It participates in pyrimidine metabolism; dUMP biosynthesis; dUMP from dCTP (dUTP route): step 2/2. In terms of biological role, this enzyme is involved in nucleotide metabolism: it produces dUMP, the immediate precursor of thymidine nucleotides and it decreases the intracellular concentration of dUTP so that uracil cannot be incorporated into DNA. The protein is Deoxyuridine 5'-triphosphate nucleotidohydrolase of Rickettsia akari (strain Hartford).